A 425-amino-acid polypeptide reads, in one-letter code: Dihydroorotase (425 aa).

The Zn(2+) site is built by histidine 56 and histidine 58. Substrate contacts are provided by residues 58-60 (HYR) and asparagine 90. Zn(2+) contacts are provided by aspartate 148, histidine 175, and histidine 228. Asparagine 274 contributes to the substrate binding site. Aspartate 301 contributes to the Zn(2+) binding site. Aspartate 301 is a catalytic residue. Substrate contacts are provided by residues histidine 305 and 319 to 320 (FG).

Belongs to the metallo-dependent hydrolases superfamily. DHOase family. Class I DHOase subfamily. Zn(2+) serves as cofactor.

It catalyses the reaction (S)-dihydroorotate + H2O = N-carbamoyl-L-aspartate + H(+). The protein operates within pyrimidine metabolism; UMP biosynthesis via de novo pathway; (S)-dihydroorotate from bicarbonate: step 3/3. Functionally, catalyzes the reversible cyclization of carbamoyl aspartate to dihydroorotate. The chain is Dihydroorotase from Lactobacillus helveticus (strain DPC 4571).